The chain runs to 563 residues: Protein NOXP20 (563 aa).

Residues 1–84 form a disordered region; the sequence is MSDDAGDTLA…ANALEPPLNG (84 aa). Residues 56 to 68 show a composition bias toward low complexity; it reads AAVQGAGAAAIGP. Position 120 is a phosphoserine (Ser-120). The interval 165–206 is disordered; sequence VNSGSSEGAQPNTENGVPEITDAATDQGPAESPPTSPSSASR. Residues 166-179 are compositionally biased toward polar residues; that stretch reads NSGSSEGAQPNTEN. A phosphothreonine mark is found at Thr-185 and Thr-189. A Phosphoserine modification is found at Ser-196. Thr-199 carries the post-translational modification Phosphothreonine. 2 positions are modified to phosphoserine: Ser-202 and Ser-261. The stretch at 343–367 forms a coiled coil; that stretch reads AAKELENEENQEEQGLEEKGEEFAR. Positions 411-436 are disordered; the sequence is SEEETKKEEKEEKSQDPQEDKKEEKK.

This sequence belongs to the FAM114 family.

Its subcellular location is the cytoplasm. Functionally, may play a role in neuronal cell development. The chain is Protein NOXP20 (FAM114A1) from Homo sapiens (Human).